Consider the following 545-residue polypeptide: Glucose-6-phosphate isomerase (545 aa).

Catalysis depends on Glu-351, which acts as the Proton donor. Active-site residues include His-382 and Lys-510.

It belongs to the GPI family.

Its subcellular location is the cytoplasm. The enzyme catalyses alpha-D-glucose 6-phosphate = beta-D-fructose 6-phosphate. It participates in carbohydrate biosynthesis; gluconeogenesis. The protein operates within carbohydrate degradation; glycolysis; D-glyceraldehyde 3-phosphate and glycerone phosphate from D-glucose: step 2/4. Its function is as follows. Catalyzes the reversible isomerization of glucose-6-phosphate to fructose-6-phosphate. This is Glucose-6-phosphate isomerase from Shewanella sp. (strain MR-4).